The following is a 296-amino-acid chain: Ribosomal RNA small subunit methyltransferase A (296 aa).

Positions 40, 42, 67, 88, 118, and 137 each coordinate S-adenosyl-L-methionine.

Belongs to the class I-like SAM-binding methyltransferase superfamily. rRNA adenine N(6)-methyltransferase family. RsmA subfamily.

The protein resides in the cytoplasm. It catalyses the reaction adenosine(1518)/adenosine(1519) in 16S rRNA + 4 S-adenosyl-L-methionine = N(6)-dimethyladenosine(1518)/N(6)-dimethyladenosine(1519) in 16S rRNA + 4 S-adenosyl-L-homocysteine + 4 H(+). Its function is as follows. Specifically dimethylates two adjacent adenosines (A1518 and A1519) in the loop of a conserved hairpin near the 3'-end of 16S rRNA in the 30S particle. May play a critical role in biogenesis of 30S subunits. The polypeptide is Ribosomal RNA small subunit methyltransferase A (Rhodococcus opacus (strain B4)).